Here is an 898-residue protein sequence, read N- to C-terminus: Sodium/hydrogen exchanger 5 (898 aa).

Residues 1 to 3 are Cytoplasmic-facing; the sequence is MLR. The chain crosses the membrane as a helical span at residues 4 to 24; that stretch reads VALLLLPGLPLAGVGATEEPT. The Extracellular segment spans residues 25–47; it reads QEPGPLGEPPGLALFRWQWHEVE. A helical transmembrane segment spans residues 48 to 68; that stretch reads APYLVALWILVASLAKIVFHL. At 69-75 the chain is on the cytoplasmic side; the sequence is SRKVTSL. The chain crosses the membrane as a helical span at residues 76-96; that stretch reads VPESCLLILLGLALGGIVLAV. Over 97-136 the chain is Extracellular; the sequence is AKKAEYQLEPGTFFLFLLPPIVLDSGYFMPSRLFFDNLGA. Residues 137–157 traverse the membrane as a helical segment; sequence ILTYAVVGTLWNAFTTGVALW. The Cytoplasmic segment spans residues 158–175; the sequence is GLQQAGLVAPRVQAGLLD. Residues 176-196 traverse the membrane as a helical segment; it reads FLLFGSLISAVDPVAVLAVFE. Over 197–202 the chain is Extracellular; that stretch reads EVHVNE. Asparagine 201 carries N-linked (GlcNAc...) asparagine glycosylation. The helical transmembrane segment at 203–223 threads the bilayer; sequence TLFIIVFGESLLNDAVTVVLY. Topologically, residues 224–248 are cytoplasmic; that stretch reads KVCNSFVEMGSANVQATDYLKGVAS. A helical membrane pass occupies residues 249-269; that stretch reads LFVVSLGGAAVGLVFAFLLAL. The Extracellular segment spans residues 270–278; the sequence is TTRFTKRVR. Residues 279-299 traverse the membrane as a helical segment; sequence IIEPLLVFLLAYAAYLTAEMA. Residues 300-333 are Cytoplasmic-facing; it reads SLSAILAVTMCGLGCKKYVEANISHKSRTAVKYT. Residues 334–354 form a helical membrane-spanning segment; sequence MKTLASSAETVIFMLLGISAV. Residues 355–362 are Extracellular-facing; the sequence is DSSKWAWD. Residues 363–383 traverse the membrane as a helical segment; that stretch reads SGLVLGTLFFILFFRALGVVL. At 384-400 the chain is on the cytoplasmic side; the sequence is QTWVLNQFRLVPLDKID. A helical transmembrane segment spans residues 401-421; sequence QVVMSYGGLRGAVAFALVILL. Residues 422–430 are Extracellular-facing; the sequence is DRTKVPAKD. A helical membrane pass occupies residues 431-451; that stretch reads YFVATTIVVVFFTVIVQGLTI. The Cytoplasmic segment spans residues 452–898; sequence KPLVKWLRVK…CIQFNRGGRL (447 aa). Disordered stretches follow at residues 660-692 and 801-888; these read TKSKPRPRKTGHKKKDGVANPEATNGKPPRDLG and ESLA…NSHW. Basic residues predominate over residues 662-674; that stretch reads SKPRPRKTGHKKK. Residues 856-867 show a composition bias toward polar residues; sequence ESSADIPQQQEL.

Belongs to the monovalent cation:proton antiporter 1 (CPA1) transporter (TC 2.A.36) family. In terms of assembly, interacts with CHP1 and CHP2. Interacts with ARRB2; facilitates the endocytosis of SLC9A5 from the plasma membrane. Interacts with RACK1; this interaction positively regulates SLC9A5 activity and promotes SLC9A5 localization to focal adhesions. Interacts with SCAMP2; this interaction regulates SLC9A5 cell-surface targeting and SLC9A5 activity. Phosphorylated by PRKAA2; promotes its accumulation at the cell surface. Phosphorylated by CSNK2A1 in a manner favoring its beta-arrestin binding and endocytosis. As to expression, highly expressed in brain. Strongly expressed in the dentate gyrus.

It is found in the cell membrane. The protein localises to the recycling endosome membrane. Its subcellular location is the cell projection. It localises to the dendritic spine membrane. The protein resides in the synaptic cell membrane. It is found in the cell junction. The protein localises to the focal adhesion. It carries out the reaction Na(+)(in) + H(+)(out) = Na(+)(out) + H(+)(in). In terms of biological role, plasma membrane Na(+)/H(+) antiporter. Mediates the electroneutral exchange of intracellular H(+) ions for extracellular Na(+) in 1:1 stoichiometry. Responsible for regulating intracellular pH homeostasis, in particular in neural tissues. Acts as a negative regulator of dendritic spine growth. Plays a role in postsynaptic remodeling and signaling. Can also contribute to organellar pH regulation, with consequences for receptor tyrosine kinase trafficking. This chain is Sodium/hydrogen exchanger 5 (Slc9a5), found in Rattus norvegicus (Rat).